Consider the following 614-residue polypeptide: Zinc finger protein 276 (614 aa).

Positions 1-46 (MKRDRLGRFLSPGIARQRGGSGGGCGSGRTRGRPSRSGGTSADGAA) are disordered. Residues 19–29 (GGSGGGCGSGR) show a composition bias toward gly residues. The ZAD domain maps to 78–164 (GHCRLCHGKF…LQRVNVSPAG (87 aa)). Positions 80, 83, 137, and 140 each coordinate Zn(2+). The segment at 271–422 (RLAQNSESNP…PGPKPGWKKK (152 aa)) is disordered. 2 stretches are compositionally biased toward polar residues: residues 272–282 (LAQNSESNPTG) and 291–302 (RETQVGSETKTL). A compositionally biased stretch (acidic residues) spans 357–369 (SDLSEGDFLSEDE). Basic and acidic residues predominate over residues 386 to 408 (YPEKKVSGKKSEGREAKRPEEPK). The span at 409–422 (IRKKPGPKPGWKKK) shows a compositional bias: basic residues. 5 consecutive C2H2-type zinc fingers follow at residues 434–458 (YKCPYQGCTAVYRGADGMKKHIKEH), 465–490 (RPCPHPGCNKVFMIDRYLQRHVKLIH), 496–518 (YICDECGQTFKQRKHLLVHQMRH), 524–546 (LQCEVCGFQCRQRASLKYHMTKH), and 554–577 (FACDQCGRRFEKAHNLNVHMSMVH). Residues 588 to 614 (PLEAEPPPGPLSPSGTMEGQAVKPEPT) are disordered.

Found in all the examined tissues, with highest levels in kidney, liver, lung, and spleen.

It is found in the nucleus. It localises to the chromosome. The protein localises to the centromere. The protein resides in the kinetochore. Functionally, may be involved in transcriptional regulation. The protein is Zinc finger protein 276 (Znf276) of Mus musculus (Mouse).